The chain runs to 421 residues: Probable mitochondrial chaperone BCS1-A (421 aa).

The Mitochondrial intermembrane portion of the chain corresponds to 1-10 (MNHLKDQSKS). The helical transmembrane segment at 11–31 (IVLGISSGIGIFLISGGINIF) threads the bilayer. Over 32–421 (KNVGQYILNR…VQSITPFNLN (390 aa)) the chain is Mitochondrial matrix. Residue 228–235 (GEPGNGKS) participates in ATP binding.

The protein belongs to the AAA ATPase family. BCS1 subfamily.

Its subcellular location is the mitochondrion inner membrane. It carries out the reaction ATP + H2O = ADP + phosphate + H(+). In terms of biological role, chaperone necessary for the assembly of mitochondrial respiratory chain complex III. The sequence is that of Probable mitochondrial chaperone BCS1-A (bcs1la) from Dictyostelium discoideum (Social amoeba).